Here is a 152-residue protein sequence, read N- to C-terminus: MTEYKKVIAQNKKALFNYFIEERLEAGIVLKGSEVQSLRQGKASIEESHATDTGHEVFLYNCHIAEYEKANRFNHATRRPRKLLLHTKEIKKIIGRIRIKGYTLVALSMYFNKKNKVKVELGIAKGKKLHDKRESIQEKDWKRDQSRLIRQK.

This sequence belongs to the SmpB family.

Its subcellular location is the cytoplasm. Required for rescue of stalled ribosomes mediated by trans-translation. Binds to transfer-messenger RNA (tmRNA), required for stable association of tmRNA with ribosomes. tmRNA and SmpB together mimic tRNA shape, replacing the anticodon stem-loop with SmpB. tmRNA is encoded by the ssrA gene; the 2 termini fold to resemble tRNA(Ala) and it encodes a 'tag peptide', a short internal open reading frame. During trans-translation Ala-aminoacylated tmRNA acts like a tRNA, entering the A-site of stalled ribosomes, displacing the stalled mRNA. The ribosome then switches to translate the ORF on the tmRNA; the nascent peptide is terminated with the 'tag peptide' encoded by the tmRNA and targeted for degradation. The ribosome is freed to recommence translation, which seems to be the essential function of trans-translation. The sequence is that of SsrA-binding protein from Rickettsia massiliae (strain Mtu5).